We begin with the raw amino-acid sequence, 248 residues long: Large ribosomal subunit protein uL4 (248 aa).

Residues 45–105 (PYGADPYAGM…KDQSKSVNTK (61 aa)) form a disordered region. The span at 92-105 (PKAEKDQSKSVNTK) shows a compositional bias: basic and acidic residues.

This sequence belongs to the universal ribosomal protein uL4 family. In terms of assembly, part of the 50S ribosomal subunit.

Its function is as follows. One of the primary rRNA binding proteins, this protein initially binds near the 5'-end of the 23S rRNA. It is important during the early stages of 50S assembly. It makes multiple contacts with different domains of the 23S rRNA in the assembled 50S subunit and ribosome. In terms of biological role, forms part of the polypeptide exit tunnel. The protein is Large ribosomal subunit protein uL4 of Haloquadratum walsbyi (strain DSM 16790 / HBSQ001).